Reading from the N-terminus, the 345-residue chain is Uroporphyrinogen decarboxylase (345 aa).

Residues 27 to 31, phenylalanine 46, aspartate 76, tyrosine 152, serine 207, and histidine 320 contribute to the substrate site; that span reads RQAGR.

Belongs to the uroporphyrinogen decarboxylase family. Homodimer.

It is found in the cytoplasm. The catalysed reaction is uroporphyrinogen III + 4 H(+) = coproporphyrinogen III + 4 CO2. The protein operates within porphyrin-containing compound metabolism; protoporphyrin-IX biosynthesis; coproporphyrinogen-III from 5-aminolevulinate: step 4/4. Its function is as follows. Catalyzes the decarboxylation of four acetate groups of uroporphyrinogen-III to yield coproporphyrinogen-III. The polypeptide is Uroporphyrinogen decarboxylase (Geobacillus thermodenitrificans (strain NG80-2)).